Consider the following 267-residue polypeptide: Indole-3-glycerol phosphate synthase (267 aa).

Belongs to the TrpC family.

The catalysed reaction is 1-(2-carboxyphenylamino)-1-deoxy-D-ribulose 5-phosphate + H(+) = (1S,2R)-1-C-(indol-3-yl)glycerol 3-phosphate + CO2 + H2O. The protein operates within amino-acid biosynthesis; L-tryptophan biosynthesis; L-tryptophan from chorismate: step 4/5. The protein is Indole-3-glycerol phosphate synthase of Verminephrobacter eiseniae (strain EF01-2).